The primary structure comprises 792 residues: Homeobox protein HAZ1 (792 aa).

Residues M1–D154 form a disordered region. Positions N15–V36 are enriched in polar residues. The span at N38 to K49 shows a compositional bias: basic residues. Polar residues predominate over residues S51–N67. Basic residues predominate over residues V95–P104. The segment covering T116–L127 has biased composition (basic and acidic residues). Residues D244–K301 form a PHD-type zinc finger. Disordered stretches follow at residues Q338 to L495 and Y529 to Q599. Positions P345–Y354 are enriched in acidic residues. Basic and acidic residues predominate over residues H362–G371. Acidic residues-rich tracts occupy residues D373–E389 and D433–C453. A DNA-binding region (homeobox) is located at residues S610–A669. Disordered stretches follow at residues E677–G697 and S711–R792. Polar residues-rich tracts occupy residues G716–A737 and N746–A760. Residues D774–R792 show a composition bias toward basic and acidic residues.

This sequence belongs to the PHD-associated homeobox family. In terms of tissue distribution, expressed in roots, leaves, stems, panicle and seeds.

The protein resides in the nucleus. Its function is as follows. Transcriptional repressor involved in the regulation of gibberrelin (GA) signaling. Binds to the 5'-GATC-3' motif of HD16/EL1 promoter. Functions as a positive regulator of GA signaling by suppressing the expression of HD16/EL1, a negative regulator of GA signaling. The chain is Homeobox protein HAZ1 from Oryza sativa subsp. japonica (Rice).